Reading from the N-terminus, the 45-residue chain is MSKRTFQPNNRRRAKTHGFRLRMRTRAGRAIISTRRAKGRARLAA.

The protein belongs to the bacterial ribosomal protein bL34 family.

This is Large ribosomal subunit protein bL34 from Salinispora tropica (strain ATCC BAA-916 / DSM 44818 / JCM 13857 / NBRC 105044 / CNB-440).